Reading from the N-terminus, the 342-residue chain is Isopentenyl-diphosphate delta-isomerase (342 aa).

11-12 (RK) serves as a coordination point for substrate. Residues S68, 69–71 (SMT), S99, and N127 contribute to the FMN site. 99–101 (SMR) provides a ligand contact to substrate. E163 contributes to the Mg(2+) binding site. FMN-binding positions include K194, T224, and 295 to 296 (AG).

This sequence belongs to the IPP isomerase type 2 family. As to quaternary structure, homooctamer. Dimer of tetramers. FMN serves as cofactor. The cofactor is NADPH. It depends on Mg(2+) as a cofactor.

It localises to the cytoplasm. It carries out the reaction isopentenyl diphosphate = dimethylallyl diphosphate. In terms of biological role, involved in the biosynthesis of isoprenoids. Catalyzes the 1,3-allylic rearrangement of the homoallylic substrate isopentenyl (IPP) to its allylic isomer, dimethylallyl diphosphate (DMAPP). The sequence is that of Isopentenyl-diphosphate delta-isomerase from Rickettsia typhi (strain ATCC VR-144 / Wilmington).